The following is a 120-amino-acid chain: Small ribosomal subunit protein bS6 (120 aa).

Positions 97-112 are enriched in polar residues; that stretch reads SNEPSPILKNQSTENT. Residues 97–120 are disordered; that stretch reads SNEPSPILKNQSTENTPVIDVTAN.

Belongs to the bacterial ribosomal protein bS6 family.

Binds together with bS18 to 16S ribosomal RNA. The protein is Small ribosomal subunit protein bS6 of Rickettsia bellii (strain RML369-C).